A 298-amino-acid chain; its full sequence is MNLRQVEAFRAVMLTGQMTAAAELMLVTQPAISRLIKDFEQATKLQLFERRGNHIIPTQEAKTLWKEVDRAFVGLNHIGNLAADIGRQAAGTLRIAAMPALANGLLPRFLAQFIRDRPNLQVSLMGLPSSMVMEAVASGRADIGYADGPQERQGFLIETRSLPAVVAVPMGHRLAGLDRVTPQDLAGERIIKQETGTLFAMRVEVAIGGIQRRPSIEVSLSHTALSLVREGAGIAIIDPAAAIEFTDRIVLRPFSIFIDAGFLEVRSAIGAPSTIVDRFTTEFWRFHDDLMKQNGLME.

The 58-residue stretch at 1–58 (MNLRQVEAFRAVMLTGQMTAAAELMLVTQPAISRLIKDFEQATKLQLFERRGNHIIPT) folds into the HTH lysR-type domain. The segment at residues 18–37 (MTAAAELMLVTQPAISRLIK) is a DNA-binding region (H-T-H motif).

This sequence belongs to the LysR transcriptional regulatory family.

In terms of biological role, positive regulatory protein for the occ operon involved in octopine catabolism and uptake. Also acts as a negative regulator of its expression. The sequence is that of Octopine catabolism/uptake operon regulatory protein OccR (occR) from Agrobacterium tumefaciens (strain Ach5).